The primary structure comprises 461 residues: GTPase Der (461 aa).

EngA-type G domains follow at residues 2–164 (QSII…NENF) and 197–369 (IKVG…ANFT). Residues 8 to 15 (GKPNVGKS), 55 to 59 (DSGGL), 116 to 119 (NKID), 203 to 210 (GRVNVGKS), 250 to 254 (DTAGI), and 314 to 317 (NKWD) contribute to the GTP site. One can recognise a KH-like domain in the interval 370–454 (QKIPTAKLNA…PLIIVSRKKG (85 aa)).

Belongs to the TRAFAC class TrmE-Era-EngA-EngB-Septin-like GTPase superfamily. EngA (Der) GTPase family. As to quaternary structure, associates with the 50S ribosomal subunit.

Its function is as follows. GTPase that plays an essential role in the late steps of ribosome biogenesis. This Campylobacter lari (strain RM2100 / D67 / ATCC BAA-1060) protein is GTPase Der.